Consider the following 1551-residue polypeptide: Transient receptor potential cation channel subfamily M member-like 2 (1551 aa).

Residues 1 to 714 (MGKDSFTPLY…WMGTMAMNTR (714 aa)) lie on the Cytoplasmic side of the membrane. Residues 715 to 730 (WWKVLVCLYLPVLIFP) lie within the membrane without spanning it. The Cytoplasmic segment spans residues 731–837 (IIYFVPDEQH…DRIMHFYSAP (107 aa)). The segment at 744 to 767 (AAEREHQKSLNQKSSKVKSHKEKN) is disordered. Residues 838–858 (FSKFVGNVVGYLAFIFLYAYV) form a helical membrane-spanning segment. The Extracellular portion of the chain corresponds to 859–877 (VLFNFPRFDPAKTLGGIHP). The chain crosses the membrane as a helical span at residues 878–898 (TEIVLYFWVFTILIEEIRQLA). Ca(2+) contacts are provided by E893 and Q896. Over 899-916 (AKPPKYIKDKVSVYFSDT) the chain is Cytoplasmic. Residues 917–937 (WNFVDIFSLTVFIIAIILRFF) form a helical membrane-spanning segment. Ca(2+) contacts are provided by N918 and D921. Residues 938–947 (TNSRIFTASR) are Extracellular-facing. The chain crosses the membrane as a helical span at residues 948–968 (IILSLDIIFFIVRSLQIFSVN). Over 969–980 (RLLGPKLVMIQK) the chain is Cytoplasmic. The chain crosses the membrane as a helical span at residues 981–1001 (MMQDLAQFIIILAVFTIAYGI). At 1002–1018 (ALHAVMFPSPGIYARNN) the chain is on the extracellular side. The N-linked (GlcNAc...) asparagine glycan is linked to N1017. Positions 1019 to 1034 (TWVTITSVVQYPYWQM) form an intramembrane region, pore-forming. The Selectivity filter motif lies at 1035–1037 (YGE). The Extracellular segment spans residues 1035–1059 (YGELFLDEIQGEKPKEFGEVDPDGR). Positions 1040 to 1042 (LDE) match the Prevents fast channel inactivation motif. A helical membrane pass occupies residues 1060–1080 (WLSPLLLAIYMVFTNILLLNL). Residues 1081–1116 (LIAIFNYTFERVQEDSDKVWKFQRYDLVQEYHSRPV) are Cytoplasmic-facing. The stretch at 1117-1135 (FAPPLVLLGHILIFIRWVW) is an intramembrane region. Topologically, residues 1136–1551 (RMCRCGHPPR…KVAKMRDAAF (416 aa)) are cytoplasmic. Residues 1184–1209 (LEERVRALGDRVDCINSQLNRVLDSM) adopt a coiled-coil conformation. A Nudix hydrolase domain is found at 1394–1546 (WKRTSAGVML…VSILEKVAKM (153 aa)). The Nudix box signature appears at 1428–1449 (GMVEPGQLVTQALKAEFGEEAM).

The protein belongs to the transient receptor (TC 1.A.4) family. LTrpC subfamily. TRPM2 sub-subfamily. In terms of assembly, homotetramer.

The protein localises to the cell membrane. With respect to regulation, activated by phosphatidylinositol 4,5-bisphosphate (PIP2). Although PIP2 is essential for the channel activation, its contribution to the level of channel activity is minimal. Also activated by diphosphate ribose-2'-phosphate. Upon binding to ADPR, channel activation requires only a short initial cytosolic Ca(2+) increase, then the activation is sustained by the uptake of extracellular Ca(2+). Activated by 2-aminoethyl diphenylborinate (2-APB) in a Ca(2+)-dependent manner. 2-APB prevents the inactivation of the channel. Nonselective, voltage-independent cation channel that mediates Ca(2+) and to a lesser extent Na(+) influx, leading to increased cytoplasmic Ca(2+) levels. Functions as a ligand-gated ion channel. Binding of ADP-ribose causes a conformation change; the channel is primed but still requires Ca(2+) binding to trigger channel opening. May have ADP-ribose pyrophosphatase activity which reduces ADP-ribose levels induced by oxidative stress, thus preventing the channel activation by reactive oxygen species. The polypeptide is Transient receptor potential cation channel subfamily M member-like 2 (Nematostella vectensis (Starlet sea anemone)).